We begin with the raw amino-acid sequence, 334 residues long: Holliday junction branch migration complex subunit RuvB (334 aa).

The segment at 4 to 184 is large ATPase domain (RuvB-L); it reads ADRLIQPQLQ…FGIPLRLEFY (181 aa). ATP contacts are provided by residues Arg24, Gly65, Lys68, Thr69, Thr70, 131–133, Arg174, Tyr184, and Arg221; that span reads EDY. Thr69 lines the Mg(2+) pocket. The small ATPAse domain (RuvB-S) stretch occupies residues 185–255; it reads NIKDLSTIVT…VADHALDLLD (71 aa). The interval 258 to 334 is head domain (RuvB-H); sequence NEGFDYMDRK…YQHFQLIKPE (77 aa). DNA is bound by residues Arg294, Arg313, and Arg318.

Belongs to the RuvB family. As to quaternary structure, homohexamer. Forms an RuvA(8)-RuvB(12)-Holliday junction (HJ) complex. HJ DNA is sandwiched between 2 RuvA tetramers; dsDNA enters through RuvA and exits via RuvB. An RuvB hexamer assembles on each DNA strand where it exits the tetramer. Each RuvB hexamer is contacted by two RuvA subunits (via domain III) on 2 adjacent RuvB subunits; this complex drives branch migration. In the full resolvosome a probable DNA-RuvA(4)-RuvB(12)-RuvC(2) complex forms which resolves the HJ.

The protein localises to the cytoplasm. It catalyses the reaction ATP + H2O = ADP + phosphate + H(+). The RuvA-RuvB-RuvC complex processes Holliday junction (HJ) DNA during genetic recombination and DNA repair, while the RuvA-RuvB complex plays an important role in the rescue of blocked DNA replication forks via replication fork reversal (RFR). RuvA specifically binds to HJ cruciform DNA, conferring on it an open structure. The RuvB hexamer acts as an ATP-dependent pump, pulling dsDNA into and through the RuvAB complex. RuvB forms 2 homohexamers on either side of HJ DNA bound by 1 or 2 RuvA tetramers; 4 subunits per hexamer contact DNA at a time. Coordinated motions by a converter formed by DNA-disengaged RuvB subunits stimulates ATP hydrolysis and nucleotide exchange. Immobilization of the converter enables RuvB to convert the ATP-contained energy into a lever motion, pulling 2 nucleotides of DNA out of the RuvA tetramer per ATP hydrolyzed, thus driving DNA branch migration. The RuvB motors rotate together with the DNA substrate, which together with the progressing nucleotide cycle form the mechanistic basis for DNA recombination by continuous HJ branch migration. Branch migration allows RuvC to scan DNA until it finds its consensus sequence, where it cleaves and resolves cruciform DNA. This chain is Holliday junction branch migration complex subunit RuvB, found in Shewanella sp. (strain W3-18-1).